A 182-amino-acid polypeptide reads, in one-letter code: Ribosome maturation factor RimM (182 aa).

Residues 101-182 enclose the PRC barrel domain; that stretch reads VDEYYWSDLK…RIYVNWGVDY (82 aa).

The protein belongs to the RimM family. Binds ribosomal protein uS19.

It localises to the cytoplasm. Functionally, an accessory protein needed during the final step in the assembly of 30S ribosomal subunit, possibly for assembly of the head region. Essential for efficient processing of 16S rRNA. May be needed both before and after RbfA during the maturation of 16S rRNA. It has affinity for free ribosomal 30S subunits but not for 70S ribosomes. This is Ribosome maturation factor RimM from Acinetobacter baylyi (strain ATCC 33305 / BD413 / ADP1).